Consider the following 776-residue polypeptide: MKLVIVESPAKAKTINKYLGDEFKVIASFGHIRDLPSKKGSVLPDENFAMKYDISDKAGKYVDAIVKDAKKADAVYLATDPDREGEAISWHVAEVIKEKNKVKSDDFFKRVAFNEITKKAIIHAVENPRKLDANLVNAQQARRALDYLVGFTLSPLLWRKLPGCKSAGRVQSVALRLICEREDEIERFKSEEYWDISLKMQNSNNELFTAKLTHVNDQKLEKFSIINEKDAKDLTEKLKSQNFHVDKIEKKQQKRQPQPPFITSSLQQEAARKLGFSAKKTMQIAQKLYEGVDIGKETIGLITYMRTDGVTLSNDAIADIRKLIDKNYGDKYLPNSPRIYKSKVKNAQEAHEAIRPTNITYTPDSLKEKLEKDYYKLYELIWKRTIACQMENVIMDLVVASLASENKEYLAKANGSTIAFDGFYKVYRESVDDEAEEENKMLPPLKEQEPLKTKEIIPNQHFTEPPPRYSEASLVKKLEELGIGRPSTYASILSVLQDRKYVSLEKKRFMPEELGRLVTVFLVGFFKKYVEYDFTAGLENELDEIAAGKLEWKAALNNFWSGFNHNIESVNEQKITEIISYVQKALDYHLFSENKESKACPSCKTGELSLKLGKFGAFLACSNYPECTFRKSIVSGNDNNENDGDLAATPNENKVLGTDKDGIEIYLKKGPYGPYVQLGEQEGKVKPKRSPVPASLNQNDITLEMALKLLSLPLKIGIHKDSGEEIMIGYGKFGPYIKYMGKFISIPKKYDFLNLSLDDAMKLIEDNKAKLEKKQA.

In terms of domain architecture, Toprim spans Met-1–Val-111. Mg(2+) contacts are provided by Glu-7 and Asp-80. In terms of domain architecture, Topo IA-type catalytic spans Asp-132–Glu-568. Positions Ser-166–Gln-171 are interaction with DNA. The active-site O-(5'-phospho-DNA)-tyrosine intermediate is the Tyr-304. The C4-type zinc finger occupies Cys-600–Cys-627.

This sequence belongs to the type IA topoisomerase family. Monomer. It depends on Mg(2+) as a cofactor.

It carries out the reaction ATP-independent breakage of single-stranded DNA, followed by passage and rejoining.. Releases the supercoiling and torsional tension of DNA, which is introduced during the DNA replication and transcription, by transiently cleaving and rejoining one strand of the DNA duplex. Introduces a single-strand break via transesterification at a target site in duplex DNA. The scissile phosphodiester is attacked by the catalytic tyrosine of the enzyme, resulting in the formation of a DNA-(5'-phosphotyrosyl)-enzyme intermediate and the expulsion of a 3'-OH DNA strand. The free DNA strand then undergoes passage around the unbroken strand, thus removing DNA supercoils. Finally, in the religation step, the DNA 3'-OH attacks the covalent intermediate to expel the active-site tyrosine and restore the DNA phosphodiester backbone. In Rickettsia felis (strain ATCC VR-1525 / URRWXCal2) (Rickettsia azadi), this protein is DNA topoisomerase 1.